We begin with the raw amino-acid sequence, 100 residues long: Large ribosomal subunit protein uL23 (100 aa).

The protein belongs to the universal ribosomal protein uL23 family. Part of the 50S ribosomal subunit. Contacts protein L29, and trigger factor when it is bound to the ribosome.

Its function is as follows. One of the early assembly proteins it binds 23S rRNA. One of the proteins that surrounds the polypeptide exit tunnel on the outside of the ribosome. Forms the main docking site for trigger factor binding to the ribosome. This is Large ribosomal subunit protein uL23 from Prochlorococcus marinus (strain MIT 9301).